The chain runs to 645 residues: Beta-galactosidase (645 aa).

Arg102 contributes to the substrate binding site. Cys106 is a Zn(2+) binding site. Substrate is bound at residue Asn140. Residue Glu141 is the Proton donor of the active site. Zn(2+)-binding residues include Cys150, Cys152, and Cys155. Glu312 functions as the Nucleophile in the catalytic mechanism. Substrate contacts are provided by residues Trp320 and Glu360–His363.

Belongs to the glycosyl hydrolase 42 family. In terms of assembly, homotrimer.

The enzyme catalyses Hydrolysis of terminal non-reducing beta-D-galactose residues in beta-D-galactosides.. Inhibited by Cu(2+) and Fe(2+), and moderately activated by divalent cations such as Co(2+), Mn(2+) and Zn(2+). Considerably activated by dithiothreitol, beta-mercaptoethanol and cysteine. This Thermus thermophilus protein is Beta-galactosidase.